The following is a 150-amino-acid chain: Nitric oxide reductase subunit C (150 aa).

A helical; Signal-anchor membrane pass occupies residues 13–29 (IFYGGSLFFFLLFAALT). Heme c-binding residues include Cys-62, Cys-65, and His-66.

As to quaternary structure, heterodimer of cytochromes b (large subunit) and c (small subunit).

The protein localises to the cell membrane. Functionally, component of the anaerobic respiratory chain that transforms nitrate to dinitrogen (denitrification). The protein is Nitric oxide reductase subunit C (norC) of Halomonas halodenitrificans (Paracoccus halodenitrificans).